Consider the following 71-residue polypeptide: MELPFTNLEVAFILLAFFIFSLFTLASIYTSPNERNEDDDFHLKEKRRKRKEFKGKKNCSDEEHKIETMQP.

Residues Leu8–Ile28 traverse the membrane as a helical segment. Residues Arg48–Lys57 are compositionally biased toward basic residues. Residues Arg48 to Pro71 are disordered. N-linked (GlcNAc...) asparagine glycosylation is present at Asn58. Basic and acidic residues predominate over residues Asn58–Pro71.

The protein localises to the membrane. The polypeptide is Small integral membrane protein 31 (Mus musculus (Mouse)).